Reading from the N-terminus, the 417-residue chain is Actin-related protein 10 (417 aa).

It belongs to the actin family. Subunit of dynactin, a multiprotein complex part of a tripartite complex with dynein and a adapter, such as BICDL1, BICD2 or HOOK3. The dynactin complex is built around ACTR1A/ACTB filament and consists of an actin-related filament composed of a shoulder domain, a pointed end and a barbed end. Its length is defined by its flexible shoulder domain. The soulder is composed of 2 DCTN1 subunits, 4 DCTN2 and 2 DCTN3. The 4 DCNT2 (via N-terminus) bind the ACTR1A filament and act as molecular rulers to determine the length. The pointed end is important for binding dynein-dynactin cargo adapters. Consists of 4 subunits: ACTR10, DCNT4, DCTN5 and DCTN6. The barbed end is composed of a CAPZA1:CAPZB heterodimers, which binds ACTR1A/ACTB filament and dynactin and stabilizes dynactin.

Its subcellular location is the cytoplasm. It localises to the cytoskeleton. Functionally, part of the dynactin complex that activates the molecular motor dynein for ultra-processive transport along microtubules. This is Actin-related protein 10 (ACTR10) from Homo sapiens (Human).